A 271-amino-acid polypeptide reads, in one-letter code: Formamidopyrimidine-DNA glycosylase (271 aa).

Proline 2 acts as the Schiff-base intermediate with DNA in catalysis. Glutamate 3 (proton donor) is an active-site residue. Catalysis depends on lysine 58, which acts as the Proton donor; for beta-elimination activity. Positions 91 and 109 each coordinate DNA. The FPG-type zinc-finger motif lies at 236 to 270 (FVYGREGLACRVCATPVRRVVIGQRSTFFCPRCQR). Residue arginine 260 is the Proton donor; for delta-elimination activity of the active site.

Belongs to the FPG family. In terms of assembly, monomer. Requires Zn(2+) as cofactor.

It carries out the reaction Hydrolysis of DNA containing ring-opened 7-methylguanine residues, releasing 2,6-diamino-4-hydroxy-5-(N-methyl)formamidopyrimidine.. It catalyses the reaction 2'-deoxyribonucleotide-(2'-deoxyribose 5'-phosphate)-2'-deoxyribonucleotide-DNA = a 3'-end 2'-deoxyribonucleotide-(2,3-dehydro-2,3-deoxyribose 5'-phosphate)-DNA + a 5'-end 5'-phospho-2'-deoxyribonucleoside-DNA + H(+). Involved in base excision repair of DNA damaged by oxidation or by mutagenic agents. Acts as a DNA glycosylase that recognizes and removes damaged bases. Has a preference for oxidized purines, such as 7,8-dihydro-8-oxoguanine (8-oxoG). Has AP (apurinic/apyrimidinic) lyase activity and introduces nicks in the DNA strand. Cleaves the DNA backbone by beta-delta elimination to generate a single-strand break at the site of the removed base with both 3'- and 5'-phosphates. This Aromatoleum aromaticum (strain DSM 19018 / LMG 30748 / EbN1) (Azoarcus sp. (strain EbN1)) protein is Formamidopyrimidine-DNA glycosylase.